A 541-amino-acid polypeptide reads, in one-letter code: Putative transferase YhbX (541 aa).

Residues 1 to 60 (MTVFNKFARSFKSHWLLYLSVIVFGITNLVASSGAHMVQRLLFFVLTILVVKRISSLPLR) are Periplasmic-facing. Residues 61 to 81 (LLVAAPFVLLTAADMSISLYS) traverse the membrane as a helical segment. Residues 82-110 (WCTFGTTFNDGFAISVLQSDPDEVAKMLG) lie on the Cytoplasmic side of the membrane. Residues 111–131 (MYSPYLCAFAFLSLLFLAVII) form a helical membrane-spanning segment. Topologically, residues 132–141 (KYDVSLPTKK) are periplasmic. A helical membrane pass occupies residues 142–162 (VTGILLLIVISGSLFSACQFA). Residues 163–264 (YKDAKNKNAF…RKQIKLFNQA (102 aa)) are Cytoplasmic-facing. The helical transmembrane segment at 265 to 285 (ISGAPYTALSVPLSLTADSVL) threads the bilayer. Over 286 to 541 (SHDIHNYPDN…QGNPTPEGQG (256 aa)) the chain is Periplasmic.

This sequence belongs to the phosphoethanolamine transferase family.

The protein localises to the cell inner membrane. Functionally, there are several lipid A forms in this strain, including a phosphoethanolamine (1-O-P-pEtN) form; overexpression of this gene does not lead to higher levels of the 1-O-P-pEtN form of lipid A. The polypeptide is Putative transferase YhbX (yhbX) (Escherichia coli O157:H7).